The chain runs to 360 residues: Heme A synthase (360 aa).

5 helical membrane-spanning segments follow: residues 13–33 (AVRWWLISVAALIALMVLVGG), 99–119 (LLGRFIGVAYLLPFLFFLWRG), 129–149 (LWLLFALGGLQGAVGWWMVAS), 160–180 (YRLATHLVLALLIFAGIVWTV), and 199–219 (SALLLVVTFVQIYLGALVAGL). Histidine 263 is a binding site for heme. 3 consecutive transmembrane segments (helical) span residues 265-282 (MTAYALFVLAALHAFDAV), 292-312 (GALWLFAAVSLQAVLGILTLL), and 315-335 (VPIGLALAHQAVAIAVLTLAV). Histidine 323 contacts heme.

Belongs to the COX15/CtaA family. Type 2 subfamily. As to quaternary structure, interacts with CtaB. Heme b serves as cofactor.

Its subcellular location is the cell membrane. It carries out the reaction Fe(II)-heme o + 2 A + H2O = Fe(II)-heme a + 2 AH2. It participates in porphyrin-containing compound metabolism; heme A biosynthesis; heme A from heme O: step 1/1. Its function is as follows. Catalyzes the conversion of heme O to heme A by two successive hydroxylations of the methyl group at C8. The first hydroxylation forms heme I, the second hydroxylation results in an unstable dihydroxymethyl group, which spontaneously dehydrates, resulting in the formyl group of heme A. The protein is Heme A synthase of Bradyrhizobium diazoefficiens (strain JCM 10833 / BCRC 13528 / IAM 13628 / NBRC 14792 / USDA 110).